The sequence spans 255 residues: Methylthioribulose-1-phosphate dehydratase (255 aa).

C98 contacts substrate. Residues H116 and H118 each coordinate Zn(2+). The active-site Proton donor/acceptor is the E150. H207 contributes to the Zn(2+) binding site.

Belongs to the aldolase class II family. MtnB subfamily. Zn(2+) is required as a cofactor.

The protein localises to the cytoplasm. It catalyses the reaction 5-(methylsulfanyl)-D-ribulose 1-phosphate = 5-methylsulfanyl-2,3-dioxopentyl phosphate + H2O. Its pathway is amino-acid biosynthesis; L-methionine biosynthesis via salvage pathway; L-methionine from S-methyl-5-thio-alpha-D-ribose 1-phosphate: step 2/6. Its function is as follows. Catalyzes the dehydration of methylthioribulose-1-phosphate (MTRu-1-P) into 2,3-diketo-5-methylthiopentyl-1-phosphate (DK-MTP-1-P). This Pyricularia oryzae (strain 70-15 / ATCC MYA-4617 / FGSC 8958) (Rice blast fungus) protein is Methylthioribulose-1-phosphate dehydratase.